Reading from the N-terminus, the 197-residue chain is ATP-dependent Clp protease proteolytic subunit 3 (197 aa).

Residue S96 is the Nucleophile of the active site. H121 is a catalytic residue.

The protein belongs to the peptidase S14 family. In terms of assembly, fourteen ClpP subunits assemble into 2 heptameric rings which stack back to back to give a disk-like structure with a central cavity, resembling the structure of eukaryotic proteasomes.

It is found in the cytoplasm. The enzyme catalyses Hydrolysis of proteins to small peptides in the presence of ATP and magnesium. alpha-casein is the usual test substrate. In the absence of ATP, only oligopeptides shorter than five residues are hydrolyzed (such as succinyl-Leu-Tyr-|-NHMec, and Leu-Tyr-Leu-|-Tyr-Trp, in which cleavage of the -Tyr-|-Leu- and -Tyr-|-Trp bonds also occurs).. Cleaves peptides in various proteins in a process that requires ATP hydrolysis. Has a chymotrypsin-like activity. Plays a major role in the degradation of misfolded proteins. The polypeptide is ATP-dependent Clp protease proteolytic subunit 3 (Prochlorococcus marinus (strain MIT 9313)).